A 438-amino-acid polypeptide reads, in one-letter code: Trigger factor (438 aa).

The PPIase FKBP-type domain occupies 163–248 (GEIAVLDFAA…VHAVKERKLP (86 aa)).

Belongs to the FKBP-type PPIase family. Tig subfamily.

It localises to the cytoplasm. The catalysed reaction is [protein]-peptidylproline (omega=180) = [protein]-peptidylproline (omega=0). Functionally, involved in protein export. Acts as a chaperone by maintaining the newly synthesized protein in an open conformation. Functions as a peptidyl-prolyl cis-trans isomerase. This chain is Trigger factor, found in Oleidesulfovibrio alaskensis (strain ATCC BAA-1058 / DSM 17464 / G20) (Desulfovibrio alaskensis).